Here is a 161-residue protein sequence, read N- to C-terminus: tRNA-specific adenosine deaminase (161 aa).

The 119-residue stretch at 2–120 folds into the CMP/dCMP-type deaminase domain; that stretch reads TQDELYMKEA…GTLMNLLQEE (119 aa). Position 53 (His53) interacts with Zn(2+). Glu55 serves as the catalytic Proton donor. Residues Cys83 and Cys86 each contribute to the Zn(2+) site.

Belongs to the cytidine and deoxycytidylate deaminase family. Homodimer. Requires Zn(2+) as cofactor.

The enzyme catalyses adenosine(34) in tRNA + H2O + H(+) = inosine(34) in tRNA + NH4(+). Its function is as follows. Catalyzes the deamination of adenosine to inosine at the wobble position 34 of tRNA(Arg2). The protein is tRNA-specific adenosine deaminase of Bacillus subtilis (strain 168).